A 483-amino-acid polypeptide reads, in one-letter code: Lipoamide acyltransferase component of branched-chain alpha-keto acid dehydrogenase complex, mitochondrial (483 aa).

The transit peptide at 1–75 (MIARRIWRSH…AMATDSNSGL (75 aa)) directs the protein to the mitochondrion. The Lipoyl-binding domain occupies 76–150 (IDVPLAQTGE…KVGETLVRLA (75 aa)). Lys-116 is subject to N6-lipoyllysine. In terms of domain architecture, Peripheral subunit-binding (PSBD) spans 183-220 (LSTPAVRNLAKDLGIDINVITGTGKDGRVLKEDVLRFS). Active-site residues include His-453 and Asp-457.

It belongs to the 2-oxoacid dehydrogenase family. As to quaternary structure, forms a 24-polypeptide structural core with octahedral symmetry. (R)-lipoate is required as a cofactor. Expressed in the non-photosynthetic organs such as siliques, flowers and roots.

It is found in the mitochondrion matrix. It carries out the reaction N(6)-[(R)-dihydrolipoyl]-L-lysyl-[protein] + 2-methylpropanoyl-CoA = N(6)-[(R)-S(8)-2-methylpropanoyldihydrolipoyl]-L-lysyl-[protein] + CoA. Functionally, the branched-chain alpha-keto dehydrogenase complex catalyzes the overall conversion of alpha-keto acids to acyl-CoA and CO(2). It contains multiple copies of three enzymatic components: branched-chain alpha-keto acid decarboxylase (E1), lipoamide acyltransferase (E2) and lipoamide dehydrogenase (E3). Within this complex, the catalytic function of this enzyme is to accept, and to transfer to coenzyme A, acyl groups that are generated by the branched-chain alpha-keto acid decarboxylase component. Required during sugar starvation and acts under the control of a sugar-sensing mechanism involving Ser/Thr kinases and phosphatases. This is Lipoamide acyltransferase component of branched-chain alpha-keto acid dehydrogenase complex, mitochondrial (BCE2) from Arabidopsis thaliana (Mouse-ear cress).